Consider the following 522-residue polypeptide: Signal transduction histidine-protein kinase/phosphatase MprB (522 aa).

At 1–30 the chain is on the cytoplasmic side; sequence MIRLHRPQRPPLRAPLRATPSLSLRWRVML. Residues 31 to 51 form a helical membrane-spanning segment; sequence LAMSMVAMVVVLMAFAVYAVI. Residues 52–167 are Extracellular-facing; it reads SAALYSDIDN…PTEAVMNKLR (116 aa). The chain crosses the membrane as a helical span at residues 168 to 188; the sequence is WVLLIVGGVGVAVAAVAGGMV. The Cytoplasmic segment spans residues 189-522; sequence TRAGLRPVAR…SVDSQSARAR (334 aa). In terms of domain architecture, HAMP spans 190 to 242; sequence RAGLRPVARLTEAAERVARTDDLRPIPVFGSDELARLTESFNLMLRALAESRE. The 221-residue stretch at 250 to 470 folds into the Histidine kinase domain; that stretch reads DAGHELRTPL…SFYVLLPGRP (221 aa). At His-253 the chain carries Phosphohistidine; by autocatalysis. The segment at 468–522 is disordered; the sequence is GRPLPPAGHSTPAGESETDKAEAATDPAVPVAGDTANSRESANVISVDSQSARAR. The segment covering 502–522 has biased composition (polar residues); sequence TANSRESANVISVDSQSARAR.

Requires Mg(2+) as cofactor. It depends on Mn(2+) as a cofactor. Autophosphorylated.

Its subcellular location is the cell membrane. The catalysed reaction is ATP + protein L-histidine = ADP + protein N-phospho-L-histidine.. Member of the two-component regulatory system MprB/MprA which contributes to maintaining a balance among several systems involved in stress resistance and is required for establishment and maintenance of persistent infection in the host. In response to environmental signals MprB acts both as a membrane-associated protein kinase that undergoes autophosphorylation and subsequently transfers the phosphate to MprA, and a protein phosphatase that dephosphorylates phospho-MprA. In Mycobacterium avium (strain 104), this protein is Signal transduction histidine-protein kinase/phosphatase MprB (mprB).